The following is a 465-amino-acid chain: Ribulose bisphosphate carboxylase large chain (465 aa).

At Lys-4 the chain carries N6,N6,N6-trimethyllysine. Residues Asn-113 and Thr-163 each contribute to the substrate site. Lys-165 acts as the Proton acceptor in catalysis. Lys-167 provides a ligand contact to substrate. Lys-191, Asp-193, and Glu-194 together coordinate Mg(2+). The residue at position 191 (Lys-191) is an N6-carboxylysine. The active-site Proton acceptor is His-284. Substrate is bound by residues Arg-285, His-317, and Ser-369.

This sequence belongs to the RuBisCO large chain family. Type I subfamily. Heterohexadecamer of 8 large chains and 8 small chains; disulfide-linked. The disulfide link is formed within the large subunit homodimers. Mg(2+) serves as cofactor. Post-translationally, the disulfide bond which can form in the large chain dimeric partners within the hexadecamer appears to be associated with oxidative stress and protein turnover.

The protein resides in the plastid. It localises to the chloroplast. The catalysed reaction is 2 (2R)-3-phosphoglycerate + 2 H(+) = D-ribulose 1,5-bisphosphate + CO2 + H2O. It catalyses the reaction D-ribulose 1,5-bisphosphate + O2 = 2-phosphoglycolate + (2R)-3-phosphoglycerate + 2 H(+). In terms of biological role, ruBisCO catalyzes two reactions: the carboxylation of D-ribulose 1,5-bisphosphate, the primary event in carbon dioxide fixation, as well as the oxidative fragmentation of the pentose substrate in the photorespiration process. Both reactions occur simultaneously and in competition at the same active site. The chain is Ribulose bisphosphate carboxylase large chain from Humiria balsamifera (Tauroniro).